We begin with the raw amino-acid sequence, 145 residues long: Putative nickel-responsive regulator (145 aa).

Residues His77, His88, His90, and Cys96 each contribute to the Ni(2+) site.

It belongs to the transcriptional regulatory CopG/NikR family. Ni(2+) serves as cofactor.

Its function is as follows. Transcriptional regulator. This chain is Putative nickel-responsive regulator, found in Rhizobium rhizogenes (strain K84 / ATCC BAA-868) (Agrobacterium radiobacter).